The following is a 299-amino-acid chain: 33 kDa chaperonin (299 aa).

2 cysteine pairs are disulfide-bonded: Cys234–Cys236 and Cys268–Cys271.

It belongs to the HSP33 family. Under oxidizing conditions two disulfide bonds are formed involving the reactive cysteines. Under reducing conditions zinc is bound to the reactive cysteines and the protein is inactive.

The protein resides in the cytoplasm. In terms of biological role, redox regulated molecular chaperone. Protects both thermally unfolding and oxidatively damaged proteins from irreversible aggregation. Plays an important role in the bacterial defense system toward oxidative stress. The sequence is that of 33 kDa chaperonin from Pseudomonas putida (strain GB-1).